A 132-amino-acid chain; its full sequence is Small ribosomal subunit protein uS8 (132 aa).

Belongs to the universal ribosomal protein uS8 family. In terms of assembly, part of the 30S ribosomal subunit. Contacts proteins S5 and S12.

Functionally, one of the primary rRNA binding proteins, it binds directly to 16S rRNA central domain where it helps coordinate assembly of the platform of the 30S subunit. The protein is Small ribosomal subunit protein uS8 of Lactobacillus delbrueckii subsp. bulgaricus (strain ATCC BAA-365 / Lb-18).